Reading from the N-terminus, the 278-residue chain is MLTSRALRIPRKPFVDLDYARHMPSAYVERTKRTVPRKVFGDRFGAPDIKMYYVHPDDYVPSHRRPWEDKQISSHLHRSDKYFSAQLSNQYFNLRRPKSERMADTEWTFFPGDLVQVMVGKDKGRQGLVLTTSRDSSDVIVDGLHTKLGEDMEGSEKLGVDKTLRWQEQPLSVSKKQVMLVDPNDEQPCEARWQLNGPGDEYIRVSTRSGYEIPIPSQAKVTYEYLQPENYIEVEGKDTPADAVLERTYMPKVASFEQEIMEEMGIKEERTPKPTFWY.

The KOW domain maps to 109-142; it reads FFPGDLVQVMVGKDKGRQGLVLTTSRDSSDVIVD.

The protein belongs to the universal ribosomal protein uL24 family.

The protein resides in the mitochondrion. This chain is Large ribosomal subunit protein uL24m (mrpl-24), found in Caenorhabditis elegans.